The sequence spans 492 residues: Proline--tRNA ligase (492 aa).

Belongs to the class-II aminoacyl-tRNA synthetase family. ProS type 3 subfamily. Homodimer.

The protein localises to the cytoplasm. The enzyme catalyses tRNA(Pro) + L-proline + ATP = L-prolyl-tRNA(Pro) + AMP + diphosphate. Catalyzes the attachment of proline to tRNA(Pro) in a two-step reaction: proline is first activated by ATP to form Pro-AMP and then transferred to the acceptor end of tRNA(Pro). The polypeptide is Proline--tRNA ligase (Christiangramia forsetii (strain DSM 17595 / CGMCC 1.15422 / KT0803) (Gramella forsetii)).